The primary structure comprises 261 residues: Enolase-phosphatase E1 (261 aa).

2 residues coordinate Mg(2+): Asp-16 and Glu-18. Substrate-binding positions include 153–154 and Lys-187; that span reads SS. Asp-212 lines the Mg(2+) pocket.

The protein belongs to the HAD-like hydrolase superfamily. MasA/MtnC family. In terms of assembly, monomer. Requires Mg(2+) as cofactor.

The protein localises to the cytoplasm. Its subcellular location is the nucleus. The enzyme catalyses 5-methylsulfanyl-2,3-dioxopentyl phosphate + H2O = 1,2-dihydroxy-5-(methylsulfanyl)pent-1-en-3-one + phosphate. Its pathway is amino-acid biosynthesis; L-methionine biosynthesis via salvage pathway; L-methionine from S-methyl-5-thio-alpha-D-ribose 1-phosphate: step 3/6. The protein operates within amino-acid biosynthesis; L-methionine biosynthesis via salvage pathway; L-methionine from S-methyl-5-thio-alpha-D-ribose 1-phosphate: step 4/6. Its function is as follows. Bifunctional enzyme that catalyzes the enolization of 2,3-diketo-5-methylthiopentyl-1-phosphate (DK-MTP-1-P) into the intermediate 2-hydroxy-3-keto-5-methylthiopentenyl-1-phosphate (HK-MTPenyl-1-P), which is then dephosphorylated to form the acireductone 1,2-dihydroxy-3-keto-5-methylthiopentene (DHK-MTPene). This is Enolase-phosphatase E1 (enoph1) from Danio rerio (Zebrafish).